The primary structure comprises 285 residues: MLIKNYRTQFVQALASIFDEKEIESFFYIILEAFHQLKRVDLVLSPDLKLDNIQLLQWETVLLQLKEQKPIQYILGETQFFGLPFYVNENTLIPRPETEELVEWIIKENLKISSLKNLKILDIGTGSGCIAISLAKNLPNASVFAIDVSDKALATAQKNAVLNEVDITFIEKNILQTEDLNQEFDIIVSNPPYVRNLEKKEIHKNVLEYEPHLALFVEDNDSLLFYRKITELATRNLSNNGQLYFEINQYLGKETVELLEKYNFKNTTLKKDIYGNDRMIKVNFR.

S-adenosyl-L-methionine is bound by residues 124–128 (GTGSG), Asp147, and Asn190. A substrate-binding site is contributed by 190–193 (NPPY).

This sequence belongs to the protein N5-glutamine methyltransferase family. PrmC subfamily.

It carries out the reaction L-glutaminyl-[peptide chain release factor] + S-adenosyl-L-methionine = N(5)-methyl-L-glutaminyl-[peptide chain release factor] + S-adenosyl-L-homocysteine + H(+). In terms of biological role, methylates the class 1 translation termination release factors RF1/PrfA and RF2/PrfB on the glutamine residue of the universally conserved GGQ motif. This Flavobacterium psychrophilum (strain ATCC 49511 / DSM 21280 / CIP 103535 / JIP02/86) protein is Release factor glutamine methyltransferase.